A 57-amino-acid chain; its full sequence is UPF0434 protein swp_2279 (57 aa).

It belongs to the UPF0434 family.

The polypeptide is UPF0434 protein swp_2279 (Shewanella piezotolerans (strain WP3 / JCM 13877)).